Reading from the N-terminus, the 2059-residue chain is Non-reducing polyketide synthase stmB (2059 aa).

In terms of domain architecture, Starter acyltransferase (SAT) spans 7 to 243 (LLFGDQTVEL…LKLAAYGAVH (237 aa)). A Ketosynthase family 3 (KS3) domain is found at 366-796 (SNSIAIVGMA…GGNSCLILEE (431 aa)). Catalysis depends on for beta-ketoacyl synthase activity residues cysteine 538, histidine 673, and histidine 713. The region spanning 895 to 1185 (WVFSGQGSQY…CGSMVKATLG (291 aa)) is the Malonyl-CoA:ACP transacylase (MAT) domain. An N-terminal hotdog fold region spans residues 1273–1413 (LHFVKKETVT…SASEWTDEWS (141 aa)). Residues 1273–1581 (LHFVKKETVT…FQRMPRMVLH (309 aa)) form the PKS/mFAS DH domain. The active-site Proton acceptor; for dehydratase activity is histidine 1306. The segment at 1435–1581 (GDHLRRPVVY…FQRMPRMVLH (147 aa)) is C-terminal hotdog fold. Catalysis depends on aspartate 1495, which acts as the Proton donor; for dehydratase activity. The region spanning 1619 to 1696 (PPKHDLADQL…DARRALGGDE (78 aa)) is the Carrier domain. Serine 1656 is modified (O-(pantetheine 4'-phosphoryl)serine). The disordered stretch occupies residues 1693-1727 (GGDETASESENDAEGDAPSDGGSPSGSWTPISPPE). The span at 1697–1709 (TASESENDAEGDA) shows a compositional bias: acidic residues. The segment covering 1710 to 1719 (PSDGGSPSGS) has biased composition (low complexity). Residues 1778–2059 (AVEYKSNVVL…LGKLLQEAVA (282 aa)) form a thioesterase (TE) domain region.

The cofactor is pantetheine 4'-phosphate.

It functions in the pathway mycotoxin biosynthesis. In terms of biological role, non-reducing polyketide synthase; part of the gene cluster that mediates the biosynthesis of stromemycin, a depside C-glucoside with two unsaturated C9 side chains belonging to aromatic polyketide glycosides. The HR-PKS stmA and the NR-PKS stmB act as scaffold-generating enzymes responsible for the biosynthesis of the polyketide skeleton bininalkenylresorcylic acid. StmA condenses on acetyl-CoA starter unit with 4 malonyl-CoA units and the stmB uses 3 more malonyl-CoA units and catalyzes the depside bond formation. The glycoytransferase stmC then acts as the tailoring enzyme responsible for 3-C-glucosylation of bininalkenylresorcylic acid to yield stromemycin. The protein is Non-reducing polyketide synthase stmB of Aspergillus ustus.